Here is a 670-residue protein sequence, read N- to C-terminus: DNA ligase (670 aa).

NAD(+)-binding positions include 33-37 (DAEYD), 82-83 (SL), and Glu-114. The active-site N6-AMP-lysine intermediate is the Lys-116. 4 residues coordinate NAD(+): Arg-137, Glu-174, Lys-291, and Lys-315. Zn(2+)-binding residues include Cys-409, Cys-412, Cys-427, and Cys-433. A BRCT domain is found at 593-670 (GVELPLEGKT…TEQDLLNLMK (78 aa)).

This sequence belongs to the NAD-dependent DNA ligase family. LigA subfamily. It depends on Mg(2+) as a cofactor. Mn(2+) is required as a cofactor.

The enzyme catalyses NAD(+) + (deoxyribonucleotide)n-3'-hydroxyl + 5'-phospho-(deoxyribonucleotide)m = (deoxyribonucleotide)n+m + AMP + beta-nicotinamide D-nucleotide.. DNA ligase that catalyzes the formation of phosphodiester linkages between 5'-phosphoryl and 3'-hydroxyl groups in double-stranded DNA using NAD as a coenzyme and as the energy source for the reaction. It is essential for DNA replication and repair of damaged DNA. The chain is DNA ligase from Vibrio campbellii (strain ATCC BAA-1116).